The chain runs to 307 residues: Carbamate kinase (307 aa).

It belongs to the carbamate kinase family.

Its subcellular location is the cytoplasm. The enzyme catalyses hydrogencarbonate + NH4(+) + ATP = carbamoyl phosphate + ADP + H2O + H(+). It functions in the pathway metabolic intermediate metabolism; carbamoyl phosphate degradation; CO(2) and NH(3) from carbamoyl phosphate: step 1/1. In terms of biological role, carbamate kinase involved in the arginine deiminase pathway of fermentative arginine utilization. The sequence is that of Carbamate kinase (arcC) from Halobacterium salinarum (strain ATCC 700922 / JCM 11081 / NRC-1) (Halobacterium halobium).